Here is a 292-residue protein sequence, read N- to C-terminus: High-affinity heme uptake system protein IsdE (292 aa).

Positions 1-19 are cleaved as a signal peptide; it reads MRIIKYLTILVISVVILTS. The N-palmitoyl cysteine moiety is linked to residue C20. C20 carries S-diacylglycerol cysteine lipidation. In terms of domain architecture, Fe/B12 periplasmic-binding spans 35–291; it reads RIVPTTVALT…QLYDLFYKDK (257 aa). V41, A42, S60, Y61, M78, and H229 together coordinate heme.

It belongs to the bacterial solute-binding protein 8 family. The cofactor is heme b.

It localises to the cell membrane. Involved in heme (porphyrin) scavenging. Binds Fe(2+) and Fe(3+) heme but the largest fraction is Fe(2+) heme. Functions as a high-affinity heme binding protein and probably has a role in relaying heme-iron from cell wall-anchored isd proteins receptors to the probable permease IsdF. The polypeptide is High-affinity heme uptake system protein IsdE (isdE) (Staphylococcus aureus (strain MRSA252)).